The primary structure comprises 204 residues: Probable carboxysome shell protein CsoS1E (204 aa).

Composition is skewed to low complexity over residues 1–14, 41–84, and 92–102; these read MPKPSSSSSSDSPS, SAST…AAGS, and GGAIKPPASSS. The interval 1-102 is disordered; that stretch reads MPKPSSSSSS…GAIKPPASSS (102 aa). A BMC domain is found at 111–196; it reads ALGMIETRGM…PHQEVEPALR (86 aa).

It belongs to the bacterial microcompartments protein family. As to quaternary structure, homohexamer.

It is found in the carboxysome. Functionally, a probable carboxysomal shell protein found only in Prochlorococcus and Synechococcus strains that grow in low light. The chain is Probable carboxysome shell protein CsoS1E from Prochlorococcus marinus (strain MIT 9313).